The sequence spans 193 residues: CASP-like protein 1F3 (193 aa).

The tract at residues 1-25 (MASPQNTSQKRFFQANSPGGMPTAS) is disordered. At 1–35 (MASPQNTSQKRFFQANSPGGMPTASQSQRSRILAQ) the chain is on the cytoplasmic side. The helical transmembrane segment at 36 to 56 (ITLRFLAIAFTVTAIPVMITA) threads the bilayer. The Extracellular portion of the chain corresponds to 57–78 (KEPVSLLGLAITPSYKQSSAMK). Residues 79–99 (FLLGVNATVFAFTALSMLFVW) form a helical membrane-spanning segment. Residues 100-118 (PLRRSGSKPINYFFLHLHD) are Cytoplasmic-facing. A helical transmembrane segment spans residues 119–139 (MVMTLLLISGCAAATAVGYLS). The Extracellular segment spans residues 140–161 (QYGQPETYWSPICDIVKKFCHQ). The helical transmembrane segment at 162–182 (MLISTVLSYLAFFCYLALNIL) threads the bilayer. The Cytoplasmic portion of the chain corresponds to 183-193 (SVHKLMSRATE).

The protein belongs to the Casparian strip membrane proteins (CASP) family. In terms of assembly, homodimer and heterodimers.

The protein localises to the cell membrane. The sequence is that of CASP-like protein 1F3 from Populus trichocarpa (Western balsam poplar).